The sequence spans 181 residues: Small ribosomal subunit protein uS4 (181 aa).

Residues 104 to 172 enclose the S4 RNA-binding domain; it reads RRLQTIVYKK…SRPPVMSQQE (69 aa).

Belongs to the universal ribosomal protein uS4 family. Part of the 30S ribosomal subunit. Contacts protein S5. The interaction surface between S4 and S5 is involved in control of translational fidelity.

One of the primary rRNA binding proteins, it binds directly to 16S rRNA where it nucleates assembly of the body of the 30S subunit. Its function is as follows. With S5 and S12 plays an important role in translational accuracy. The chain is Small ribosomal subunit protein uS4 from Saccharolobus solfataricus (strain ATCC 35092 / DSM 1617 / JCM 11322 / P2) (Sulfolobus solfataricus).